We begin with the raw amino-acid sequence, 490 residues long: Muscarinic acetylcholine receptor M4 (490 aa).

Over 1-42 (MHNLSAQPWQAKMANLTYDNVTLSNRSEVAIQPPTNYKTVEL) the chain is Extracellular. N-linked (GlcNAc...) asparagine glycosylation is found at Asn3, Asn15, Asn20, and Asn25. A helical membrane pass occupies residues 43–64 (VFIATVTGSLSLVTVVGNILVM). Residues 65-78 (LSIKVNRQLQTVNN) lie on the Cytoplasmic side of the membrane. The helical transmembrane segment at 79–99 (YFLFSLACADLIIGVFSMNLY) threads the bilayer. Residues 100-116 (TVYIIKGYWPLGAVVCD) lie on the Extracellular side of the membrane. Residues Cys115 and Cys195 are joined by a disulfide bond. Residues 117–138 (LWLALDYVVSNASVMNLLIISF) form a helical membrane-spanning segment. The Cytoplasmic segment spans residues 139 to 158 (DRYFCVTKPLTYPARRTTKM). A helical membrane pass occupies residues 159–181 (AGLMIAAAWILSFILWAPAILFW). Over 182-203 (QFIVGKRTVHERECYIQFLSNP) the chain is Extracellular. Residues 204–226 (AVTFGTAIAAFYLPVVIMTVLYI) traverse the membrane as a helical segment. Over 227–412 (HISLASRSRV…AAREKKVTRT (186 aa)) the chain is Cytoplasmic. A compositionally biased stretch (basic residues) spans 236–250 (VRRHKPESRKERKGK). Residues 236-343 (VRRHKPESRK…HPRVNPTSKW (108 aa)) are disordered. Over residues 270–285 (RAVEVKEEVRNGKVDD) the composition is skewed to basic and acidic residues. Polar residues-rich tracts occupy residues 287–296 (PSAQTEATGQ) and 304–314 (NESSTVSMTQT). The chain crosses the membrane as a helical span at residues 413–433 (IFAILLAFILTWTPYNVMVLI). The Extracellular portion of the chain corresponds to 434-447 (NTFCETCVPETVWS). Residues 448–467 (IGYWLCYVNSTINPACYALC) form a helical membrane-spanning segment. The Cytoplasmic portion of the chain corresponds to 468–490 (NATFKKTFKHLLMCQYRNIGTAR).

The protein belongs to the G-protein coupled receptor 1 family. Muscarinic acetylcholine receptor subfamily. CHRM4 sub-subfamily. Expressed in heart and brain.

Its subcellular location is the cell membrane. It is found in the postsynaptic cell membrane. In terms of biological role, the muscarinic acetylcholine receptor mediates various cellular responses, including inhibition of adenylate cyclase, breakdown of phosphoinositides and modulation of potassium channels through the action of G proteins. Primary transducing effect is inhibition of adenylate cyclase. May couple to multiple functional responses in cell lines. The sequence is that of Muscarinic acetylcholine receptor M4 (CHRM4) from Gallus gallus (Chicken).